Here is a 174-residue protein sequence, read N- to C-terminus: FMN reductase (NADH) RutF (174 aa).

This sequence belongs to the non-flavoprotein flavin reductase family. RutF subfamily.

The catalysed reaction is FMNH2 + NAD(+) = FMN + NADH + 2 H(+). Functionally, catalyzes the reduction of FMN to FMNH2 which is used to reduce pyrimidine by RutA via the Rut pathway. The sequence is that of FMN reductase (NADH) RutF from Stutzerimonas stutzeri (strain A1501) (Pseudomonas stutzeri).